The following is an 881-amino-acid chain: DNA replication helicase (881 aa).

90-97 (GNAGSGKS) lines the ATP pocket.

It belongs to the herpesviridae helicase family. As to quaternary structure, associates with the primase and the primase-associated factor to form the helicase-primase complex.

The protein localises to the host nucleus. In terms of biological role, component of the helicase/primase complex. Unwinds the DNA at the replication forks and generates single-stranded DNA for both leading and lagging strand synthesis. The primase synthesizes short RNA primers on the lagging strand that the polymerase elongates using dNTPs. Possesses helicase-like motifs and therefore may act as the helicase subunit of the complex. The chain is DNA replication helicase from Homo sapiens (Human).